We begin with the raw amino-acid sequence, 309 residues long: Gamma-hemolysin component A (309 aa).

The N-terminal stretch at 1-29 is a signal peptide; it reads MIKNKILTATLAVGLIAPLANPFIEISKA.

Belongs to the aerolysin family. In terms of assembly, toxicity requires sequential binding and synergistic association of a class S and a class F component which form heterooligomeric complexes. HlgA (class S) associates with HlgB (class F) thus forming an AB toxin in strains producing both gamma-hemolysins and leukocidins. HlgA and LukF-PV can also form a complex.

The protein resides in the secreted. Functionally, toxin that seems to act by forming pores in the membrane of the cell. Has a hemolytic and a leucotoxic activity. The sequence is that of Gamma-hemolysin component A (hlgA) from Staphylococcus aureus (strain MRSA252).